The sequence spans 679 residues: Enzymatic polyprotein (679 aa).

Positions 40–130 are protease; that stretch reads LHCFVDTGAS…LYEPFIQFTD (91 aa). Asp-45 is a catalytic residue. A Reverse transcriptase domain is found at 272-452; it reads LKVIKPSKSP…KKINFLGLEI (181 aa).

It belongs to the caulimoviridae enzymatic polyprotein family.

It carries out the reaction DNA(n) + a 2'-deoxyribonucleoside 5'-triphosphate = DNA(n+1) + diphosphate. Functionally, encodes for at least two polypeptides: protease (PR) and reverse transcriptase (RT). The protease processes the polyprotein in cis. Reverse transcriptase is multifunctional enzyme that converts the viral RNA genome into dsDNA in viral cytoplasmic capsids. This enzyme displays a DNA polymerase activity that can copy either DNA or RNA templates, and a ribonuclease H (RNase H) activity that cleaves the RNA strand of RNA-DNA heteroduplexes in a partially processive 3'- to 5'-endonucleasic mode. Neo-synthesized pregenomic RNA (pgRNA) are encapsidated, and reverse-transcribed inside the nucleocapsid. Partial (+)DNA is synthesized from the (-)DNA template and generates the relaxed circular DNA (RC-DNA) genome. After budding and infection, the RC-DNA migrates in the nucleus, and is converted into a plasmid-like covalently closed circular DNA (cccDNA). The protein is Enzymatic polyprotein of Cauliflower mosaic virus (strain BBC) (CaMV).